Reading from the N-terminus, the 395-residue chain is Biotin biosynthesis cytochrome P450 (395 aa).

Arg60 lines the substrate pocket. 89–93 (HRRLR) is a binding site for heme. 169-173 (IDFTR) contacts substrate. An intrachain disulfide couples Cys250 to Cys275. Heme is bound at residue 285 to 287 (TAR). Residue Tyr307 coordinates substrate. Heme contacts are provided by residues 343–345 (HVC) and Cys345.

It depends on heme as a cofactor.

The catalysed reaction is a C2-C8-saturated long-chain fatty acyl-[ACP] + 2 reduced [flavodoxin] + 3 O2 = 6-carboxyhexanoyl-[ACP] + a fatty aldehyde + 2 oxidized [flavodoxin] + 3 H2O + 3 H(+). The protein operates within cofactor biosynthesis; biotin biosynthesis. Its function is as follows. Catalyzes the C-C bond cleavage of fatty acid linked to acyl carrier protein (ACP) to generate pimelic acid for biotin biosynthesis. It has high affinity for long-chain fatty acids with the greatest affinity for myristic acid. In Bacillus subtilis (strain 168), this protein is Biotin biosynthesis cytochrome P450 (bioI).